The sequence spans 108 residues: Putative septation protein SpoVG (108 aa).

It belongs to the SpoVG family.

Its function is as follows. Could be involved in septation. This is Putative septation protein SpoVG from Bdellovibrio bacteriovorus (strain ATCC 15356 / DSM 50701 / NCIMB 9529 / HD100).